Reading from the N-terminus, the 450-residue chain is FAD-linked oxidoreductase penO (450 aa).

One can recognise an FAD-binding PCMH-type domain in the interval 32-203; it reads PPELPYAIVK…TRFFIRTRPA (172 aa).

Belongs to the oxygen-dependent FAD-linked oxidoreductase family. FAD serves as cofactor.

Its pathway is secondary metabolite biosynthesis. Functionally, FAD-linked oxidoreductase; part of the gene cluster that mediates the biosynthesis of the indole diterpenes penitrems. The geranylgeranyl diphosphate (GGPP) synthase penG catalyzes the first step in penitrem biosynthesis via conversion of farnesyl pyrophosphate and isopentyl pyrophosphate into geranylgeranyl pyrophosphate (GGPP). Condensation of indole-3-glycerol phosphate with GGPP by the prenyl transferase penC then forms 3-geranylgeranylindole (3-GGI). Epoxidation by the FAD-dependent monooxygenase penM leads to a epoxidized-GGI that is substrate of the terpene cyclase penB for cyclization to yield paspaline. Paspaline is subsequently converted to 13-desoxypaxilline by the cytochrome P450 monooxygenase penP, the latter being then converted to paxilline by the cytochrome P450 monooxygenase penQ. Paxilline is converted to beta-paxitriol via C-10 ketoreduction by the short-chain dehydrogenase PC-15 which can be monoprenylated at the C-20 by the indole diterpene prenyltransferase penD. A two-step elimination (acetylation and elimination) process performed by the O-acetyltransferase PC-16 and the P.simplicissimum ptmI-ortholog not yet identified in P.crustosum, leads to the production of the prenylated form of penijanthine. The FAD-linked oxidoreductase ptmO then converts the prenylated form of penijanthine into PC-M5 which is in turn transformed into PC-M4 by the aromatic dimethylallyltransferase PC-22. A series of oxidation steps involving 4 cytochrome P450 monooxygenases (PC-21, PC-05, PC-23, PC-20) and a FAD-dependent monooxygenase (PC-14) are required for the transformation of PC-M4 to penitrems A and E. Synthesis of these final products is proposed to proceed via penitrems D and C (PC-21, PC-05, PC-14) and penitrems B and F (PC-21, PC-05, PC-14, PC-23). In Penicillium crustosum (Blue mold fungus), this protein is FAD-linked oxidoreductase penO.